The chain runs to 271 residues: MDREEIKVAVLRMEGTNCEDETVKAFRSLGVEAEAVHIKQFYSDMIRFEEQRSVFDYQCLVFPGGFSAGDYIRAGAIFSARVKSVLRKDIEEFIKMGYPILGICNGFQVLVELGALPGFDEDKPLAEKPEMALAMNDSSRFECRPTLLKKESEKCIFVKNLKKDVVMFPVAHAEGKVVFPSGKEDEYLERLTSNDQIVFRYVDEKGDYAGYPWNPNGSFYNIAGICNATHTVFGLMPHPERAFFGYQVGRREGYGDGYCIFRSVVDYLEKL.

The region spanning K7 to G253 is the Glutamine amidotransferase type-1 domain. The active-site Nucleophile is the C104. Residues H238 and E240 contribute to the active site.

In terms of assembly, part of the FGAM synthase complex composed of 1 PurL, 1 PurQ and 2 PurS subunits.

The protein resides in the cytoplasm. It catalyses the reaction N(2)-formyl-N(1)-(5-phospho-beta-D-ribosyl)glycinamide + L-glutamine + ATP + H2O = 2-formamido-N(1)-(5-O-phospho-beta-D-ribosyl)acetamidine + L-glutamate + ADP + phosphate + H(+). It carries out the reaction L-glutamine + H2O = L-glutamate + NH4(+). It functions in the pathway purine metabolism; IMP biosynthesis via de novo pathway; 5-amino-1-(5-phospho-D-ribosyl)imidazole from N(2)-formyl-N(1)-(5-phospho-D-ribosyl)glycinamide: step 1/2. In terms of biological role, part of the phosphoribosylformylglycinamidine synthase complex involved in the purines biosynthetic pathway. Catalyzes the ATP-dependent conversion of formylglycinamide ribonucleotide (FGAR) and glutamine to yield formylglycinamidine ribonucleotide (FGAM) and glutamate. The FGAM synthase complex is composed of three subunits. PurQ produces an ammonia molecule by converting glutamine to glutamate. PurL transfers the ammonia molecule to FGAR to form FGAM in an ATP-dependent manner. PurS interacts with PurQ and PurL and is thought to assist in the transfer of the ammonia molecule from PurQ to PurL. This chain is Phosphoribosylformylglycinamidine synthase subunit PurQ, found in Archaeoglobus fulgidus (strain ATCC 49558 / DSM 4304 / JCM 9628 / NBRC 100126 / VC-16).